We begin with the raw amino-acid sequence, 200 residues long: 3-isopropylmalate dehydratase small subunit (200 aa).

This sequence belongs to the LeuD family. LeuD type 1 subfamily. As to quaternary structure, heterodimer of LeuC and LeuD.

It catalyses the reaction (2R,3S)-3-isopropylmalate = (2S)-2-isopropylmalate. Its pathway is amino-acid biosynthesis; L-leucine biosynthesis; L-leucine from 3-methyl-2-oxobutanoate: step 2/4. Its function is as follows. Catalyzes the isomerization between 2-isopropylmalate and 3-isopropylmalate, via the formation of 2-isopropylmaleate. The sequence is that of 3-isopropylmalate dehydratase small subunit from Vibrio vulnificus (strain YJ016).